We begin with the raw amino-acid sequence, 783 residues long: Galactinol--sucrose galactosyltransferase (783 aa).

It belongs to the glycosyl hydrolases 36 family.

The catalysed reaction is alpha-D-galactosyl-(1-&gt;3)-1D-myo-inositol + sucrose = raffinose + myo-inositol. With respect to regulation, inhibited by Ag(2)+, Hg(2+), Zn(2+), p-chloromercuribenzoate (pCMB) and 1-deoxygalactonojirimycin. Transglycosidase operating by a ping-pong reaction mechanism. Involved in the synthesis of raffinose, a major soluble carbohydrate in seeds, roots and tubers. Specific for galactinol and p-nitrophenyl-alpha-D-galactoside as galactosyl donors. Able to utilize sucrose, lactose, 4-beta-galactobiose, N-acetyl-D-lactosamine, trehalose and lacto-N-biose as acceptors. May also act as a glycoside hydrolase. This is Galactinol--sucrose galactosyltransferase (RFS) from Oryza sativa subsp. japonica (Rice).